The chain runs to 410 residues: Probable serine/threonine-protein kinase PBL9 (410 aa).

The N-myristoyl glycine moiety is linked to residue Gly-2. Cys-4 is lipidated: S-palmitoyl cysteine. A disordered region spans residues 11 to 46 (AESSGASTKYDAKDIGSLGSKASSVSVRPSPRTEGE). The Protein kinase domain occupies 68–352 (FRPDSVLGEG…MSEVVSHLEH (285 aa)). ATP-binding positions include 74 to 82 (LGEGGFGCV) and Lys-106. The residue at position 151 (Tyr-151) is a Phosphotyrosine. The active-site Proton acceptor is the Asp-203. Phosphoserine is present on residues Ser-207 and Ser-237. A phosphothreonine mark is found at Thr-238 and Thr-243. Tyr-251 is modified (phosphotyrosine).

Belongs to the protein kinase superfamily. Ser/Thr protein kinase family. Interacts with the Xanthomonas campestris effector XopAC/AvrAC. In terms of tissue distribution, expressed in stomatal guard cells of leaves.

The protein localises to the cell membrane. The enzyme catalyses L-seryl-[protein] + ATP = O-phospho-L-seryl-[protein] + ADP + H(+). It catalyses the reaction L-threonyl-[protein] + ATP = O-phospho-L-threonyl-[protein] + ADP + H(+). Functionally, possible bi-functional kinase. In vitro, it exhibits serine/threonine activity. In vivo, can phosphorylate tyrosine residues of limited substrates. May be involved in plant defense signaling. The sequence is that of Probable serine/threonine-protein kinase PBL9 from Arabidopsis thaliana (Mouse-ear cress).